We begin with the raw amino-acid sequence, 43 residues long: METATLVAIFISCLLVSFTGYALYTAFGQPSKELRDPFEEHED.

Residues 7-27 (VAIFISCLLVSFTGYALYTAF) traverse the membrane as a helical segment.

This sequence belongs to the PsbN family.

It localises to the plastid. The protein localises to the chloroplast thylakoid membrane. Functionally, may play a role in photosystem I and II biogenesis. The polypeptide is Protein PsbN (Zygnema circumcarinatum (Green alga)).